Reading from the N-terminus, the 439-residue chain is uncharacterized protein (439 aa).

The DAGKc domain occupies 65-208 (TRPKRVFVLV…VYAFELTTEG (144 aa)).

This is an uncharacterized protein from Caenorhabditis elegans.